We begin with the raw amino-acid sequence, 86 residues long: Cell division topological specificity factor (86 aa).

It belongs to the MinE family.

In terms of biological role, prevents the cell division inhibition by proteins MinC and MinD at internal division sites while permitting inhibition at polar sites. This ensures cell division at the proper site by restricting the formation of a division septum at the midpoint of the long axis of the cell. In Polaromonas sp. (strain JS666 / ATCC BAA-500), this protein is Cell division topological specificity factor.